Reading from the N-terminus, the 1187-residue chain is DNA-directed RNA polymerase subunit beta (1187 aa).

Positions 1150–1187 are disordered; the sequence is KDEDDDPASSADDLGFNIGARPDAAAKEDQKAEEPEYQ. Residues 1173–1187 are compositionally biased toward basic and acidic residues; that stretch reads AAAKEDQKAEEPEYQ.

This sequence belongs to the RNA polymerase beta chain family. In terms of assembly, the RNAP catalytic core consists of 2 alpha, 1 beta, 1 beta' and 1 omega subunit. When a sigma factor is associated with the core the holoenzyme is formed, which can initiate transcription.

It carries out the reaction RNA(n) + a ribonucleoside 5'-triphosphate = RNA(n+1) + diphosphate. DNA-dependent RNA polymerase catalyzes the transcription of DNA into RNA using the four ribonucleoside triphosphates as substrates. The polypeptide is DNA-directed RNA polymerase subunit beta (Bifidobacterium longum (strain NCC 2705)).